The sequence spans 206 residues: Octanoyltransferase (206 aa).

In terms of domain architecture, BPL/LPL catalytic spans 30–206 (PETNDEIWLV…EFVTLLNNSI (177 aa)). Residues 69–76 (RGGQVTYH), 137–139 (SLG), and 150–152 (GIA) each bind substrate. Cys168 acts as the Acyl-thioester intermediate in catalysis.

It belongs to the LipB family.

The protein resides in the cytoplasm. It carries out the reaction octanoyl-[ACP] + L-lysyl-[protein] = N(6)-octanoyl-L-lysyl-[protein] + holo-[ACP] + H(+). It participates in protein modification; protein lipoylation via endogenous pathway; protein N(6)-(lipoyl)lysine from octanoyl-[acyl-carrier-protein]: step 1/2. Catalyzes the transfer of endogenously produced octanoic acid from octanoyl-acyl-carrier-protein onto the lipoyl domains of lipoate-dependent enzymes. Lipoyl-ACP can also act as a substrate although octanoyl-ACP is likely to be the physiological substrate. The protein is Octanoyltransferase of Francisella tularensis subsp. mediasiatica (strain FSC147).